A 108-amino-acid polypeptide reads, in one-letter code: Synaptobrevin-1 (108 aa).

The tract at residues 1 to 25 (MDAQGDAGAQGGSQGPRPSNKRLQQ) is disordered. The Cytoplasmic segment spans residues 1-85 (MDAQGDAGAQ…KRKYWWKNIK (85 aa)). Residues 22–82 (RLQQTQAQVD…ATLKRKYWWK (61 aa)) enclose the v-SNARE coiled-coil homology domain. The chain crosses the membrane as a helical; Anchor for type IV membrane protein span at residues 86 to 106 (MMIIMCAIVVILIIIIVLWAG). Residues 107-108 (GK) lie on the Extracellular side of the membrane.

Belongs to the synaptobrevin family. In terms of assembly, part of the SNARE core complex containing CBG09569/SNAP25, snb-1/VAMP2 and CBG03570/STX1A. This complex binds to cpx-1/CPLX1.

It is found in the cytoplasmic vesicle. It localises to the secretory vesicle. The protein resides in the synaptic vesicle membrane. Its subcellular location is the cell membrane. The protein localises to the synapse. It is found in the synaptosome. In terms of biological role, involved in the targeting and/or fusion of transport vesicles to their target membrane. Acts in neuronal exocytosis of synaptic transmission. Likely to have a role in cholinergic transmisson. Required for viability, coordinated movement and M3 pharynx motor neuron function. The protein is Synaptobrevin-1 of Caenorhabditis briggsae.